We begin with the raw amino-acid sequence, 429 residues long: Histidine--tRNA ligase (429 aa).

Belongs to the class-II aminoacyl-tRNA synthetase family. Homodimer.

The protein resides in the cytoplasm. The catalysed reaction is tRNA(His) + L-histidine + ATP = L-histidyl-tRNA(His) + AMP + diphosphate + H(+). The sequence is that of Histidine--tRNA ligase from Desulfotalea psychrophila (strain LSv54 / DSM 12343).